A 338-amino-acid polypeptide reads, in one-letter code: Holliday junction branch migration complex subunit RuvB (338 aa).

Positions 4–184 (SDRLVSGKAR…FGISHHLQYY (181 aa)) are large ATPase domain (RuvB-L). ATP contacts are provided by residues arginine 24, glycine 65, lysine 68, threonine 69, threonine 70, 131 to 133 (EDY), arginine 174, tyrosine 184, and arginine 221. Threonine 69 is a binding site for Mg(2+). The interval 185–255 (HHDELTQIVM…LADEALELLA (71 aa)) is small ATPAse domain (RuvB-S). The interval 258–338 (HLGFDALDRR…NIEVPDGRNS (81 aa)) is head domain (RuvB-H). Positions 294, 313, and 318 each coordinate DNA.

Belongs to the RuvB family. In terms of assembly, homohexamer. Forms an RuvA(8)-RuvB(12)-Holliday junction (HJ) complex. HJ DNA is sandwiched between 2 RuvA tetramers; dsDNA enters through RuvA and exits via RuvB. An RuvB hexamer assembles on each DNA strand where it exits the tetramer. Each RuvB hexamer is contacted by two RuvA subunits (via domain III) on 2 adjacent RuvB subunits; this complex drives branch migration. In the full resolvosome a probable DNA-RuvA(4)-RuvB(12)-RuvC(2) complex forms which resolves the HJ.

It is found in the cytoplasm. It carries out the reaction ATP + H2O = ADP + phosphate + H(+). Its function is as follows. The RuvA-RuvB-RuvC complex processes Holliday junction (HJ) DNA during genetic recombination and DNA repair, while the RuvA-RuvB complex plays an important role in the rescue of blocked DNA replication forks via replication fork reversal (RFR). RuvA specifically binds to HJ cruciform DNA, conferring on it an open structure. The RuvB hexamer acts as an ATP-dependent pump, pulling dsDNA into and through the RuvAB complex. RuvB forms 2 homohexamers on either side of HJ DNA bound by 1 or 2 RuvA tetramers; 4 subunits per hexamer contact DNA at a time. Coordinated motions by a converter formed by DNA-disengaged RuvB subunits stimulates ATP hydrolysis and nucleotide exchange. Immobilization of the converter enables RuvB to convert the ATP-contained energy into a lever motion, pulling 2 nucleotides of DNA out of the RuvA tetramer per ATP hydrolyzed, thus driving DNA branch migration. The RuvB motors rotate together with the DNA substrate, which together with the progressing nucleotide cycle form the mechanistic basis for DNA recombination by continuous HJ branch migration. Branch migration allows RuvC to scan DNA until it finds its consensus sequence, where it cleaves and resolves cruciform DNA. The chain is Holliday junction branch migration complex subunit RuvB from Dichelobacter nodosus (strain VCS1703A).